A 488-amino-acid chain; its full sequence is (S)-canadine synthase CYP719A21 (488 aa).

A helical membrane pass occupies residues 6–26 (LWILTLISTILAVFAAVLIIF). Cysteine 432 lines the heme pocket.

The protein belongs to the cytochrome P450 family. It depends on heme as a cofactor.

Its subcellular location is the membrane. It carries out the reaction (S)-tetrahydrocolumbamine + reduced [NADPH--hemoprotein reductase] + O2 = (S)-canadine + oxidized [NADPH--hemoprotein reductase] + 2 H2O + H(+). It participates in alkaloid biosynthesis. In terms of biological role, cytochrome P450 involved in the biosynthesis of the benzylisoquinoline alkaloid noscapine. Converts (S)-tetrahydrocolumbamine to (S)-canadine. The sequence is that of (S)-canadine synthase CYP719A21 from Papaver somniferum (Opium poppy).